The following is a 155-amino-acid chain: Protein SprT-like (155 aa).

The SprT-like domain occupies 7 to 145 (QRHMEEVSLQ…GSCGGKLIQI (139 aa)). Zn(2+) is bound at residue H67. Residue E68 is part of the active site. Residue H71 participates in Zn(2+) binding.

The protein belongs to the SprT family. Requires Zn(2+) as cofactor.

It is found in the cytoplasm. This Listeria monocytogenes serotype 4a (strain HCC23) protein is Protein SprT-like.